We begin with the raw amino-acid sequence, 647 residues long: DNA mismatch repair protein MutL (647 aa).

The segment at 346 to 378 is disordered; the sequence is QTVHAPRSAAPRVSERASDEPPAWQPSPTSGEP.

The protein belongs to the DNA mismatch repair MutL/HexB family.

Functionally, this protein is involved in the repair of mismatches in DNA. It is required for dam-dependent methyl-directed DNA mismatch repair. May act as a 'molecular matchmaker', a protein that promotes the formation of a stable complex between two or more DNA-binding proteins in an ATP-dependent manner without itself being part of a final effector complex. The protein is DNA mismatch repair protein MutL of Limosilactobacillus fermentum (strain NBRC 3956 / LMG 18251) (Lactobacillus fermentum).